The primary structure comprises 225 residues: MDHTYEVHQIKTYHQMWSNYCYIIADRSKKSAIAVDPSWEIDKITDKLHELDVDLSAILLTHSHYDHVNLAEPLQQIYHSDIYMSSAEIDFYQFRCRNLIALEDGQTFAAGGFIIRSILTPGHTAGGMCYLLSDHLFTGDTVFTEGCGICGDRGSSAEDMFHSIQRIKASIPPHVRVYPGHSFGEKPGQKMESLLKNNIYFQIEKKEHFVNFRNRKNQKGLFHFK.

H62, H64, D66, H67, H123, D140, and H181 together coordinate Zn(2+).

The protein belongs to the metallo-beta-lactamase superfamily. The cofactor is Zn(2+).

The protein localises to the cytoplasm. It participates in antibiotic biosynthesis; bacillaene biosynthesis. Functionally, probably involved in some intermediate steps for the synthesis of the antibiotic polyketide bacillaene which is involved in secondary metabolism. In Bacillus velezensis (strain DSM 23117 / BGSC 10A6 / LMG 26770 / FZB42) (Bacillus amyloliquefaciens subsp. plantarum), this protein is Probable polyketide biosynthesis zinc-dependent hydrolase BaeB (baeB).